The sequence spans 89 residues: Cell division topological specificity factor (89 aa).

The protein belongs to the MinE family.

In terms of biological role, prevents the cell division inhibition by proteins MinC and MinD at internal division sites while permitting inhibition at polar sites. This ensures cell division at the proper site by restricting the formation of a division septum at the midpoint of the long axis of the cell. This Legionella pneumophila (strain Paris) protein is Cell division topological specificity factor.